The chain runs to 412 residues: DNA replication and repair protein RecF (412 aa).

ATP is bound at residue 30 to 37 (GKNGLGKT).

It belongs to the RecF family.

The protein resides in the cytoplasm. Its function is as follows. The RecF protein is involved in DNA metabolism; it is required for DNA replication and normal SOS inducibility. RecF binds preferentially to single-stranded, linear DNA. It also seems to bind ATP. The sequence is that of DNA replication and repair protein RecF from Bifidobacterium longum subsp. infantis (strain ATCC 15697 / DSM 20088 / JCM 1222 / NCTC 11817 / S12).